The chain runs to 245 residues: Phosphoribosylaminoimidazole-succinocarboxamide synthase (245 aa).

It belongs to the SAICAR synthetase family.

It catalyses the reaction 5-amino-1-(5-phospho-D-ribosyl)imidazole-4-carboxylate + L-aspartate + ATP = (2S)-2-[5-amino-1-(5-phospho-beta-D-ribosyl)imidazole-4-carboxamido]succinate + ADP + phosphate + 2 H(+). It functions in the pathway purine metabolism; IMP biosynthesis via de novo pathway; 5-amino-1-(5-phospho-D-ribosyl)imidazole-4-carboxamide from 5-amino-1-(5-phospho-D-ribosyl)imidazole-4-carboxylate: step 1/2. This chain is Phosphoribosylaminoimidazole-succinocarboxamide synthase, found in Acaryochloris marina (strain MBIC 11017).